The chain runs to 483 residues: MRAQPAASHFVDGRPLEDETGAPIPVIYPATGEEIARLHEATPAVIEAALASGARAQAAWAAMRPVERARILRRASDLIRAHNEELSLLETLDTGKPLQETLVADWASGADALEFFAGLAPVVTGETVPLGQDFVYTIREPLGLCVGIGAWNYPSQIACWKAAPALALGNAMVFKPSEVTPLGALKLAEILIEAGLPPGLFNVVQGRGAVGASLVTDSRVAKVSLTGSVPTGRRVYAAAAEGVRHVTMELGGKSPLIVFDDADLESAIGAAMLGNFYSAGQICSNGTRVFVQKGIKEAFLARLAERADAIRMGDPLDPEVQMGPLVSQAQLEKVLAYIEKARAEGGRLVCGGEASVSPGCYVQPTVFADVTDAMTLAREEVFGPVMAVLDFETEEEAIARANATDFGLAAGVFTADLTRAHRVVAQLQAGTCWINAYNLTPVEAPFGGVKLSGVGRENGRAAVQHYTQVKSVYVGMGPVDAPY.

Isoleucine 27 and aspartate 93 together coordinate K(+). 149–151 is an NAD(+) binding site; it reads GAW. Lysine 161 (charge relay system) is an active-site residue. Residue 175–178 participates in NAD(+) binding; the sequence is KPSE. Valine 179 lines the K(+) pocket. 228–231 provides a ligand contact to NAD(+); it reads SVPT. Valine 243 serves as a coordination point for K(+). The active-site Proton acceptor is the glutamate 249. The NAD(+) site is built by glycine 251, cysteine 283, and glutamate 380. The active-site Nucleophile is cysteine 283. Cysteine 283 is subject to Cysteine sulfenic acid (-SOH). Residues lysine 450 and glycine 453 each coordinate K(+). Glutamate 457 acts as the Charge relay system in catalysis.

The protein belongs to the aldehyde dehydrogenase family. In terms of assembly, dimer of dimers. The cofactor is K(+).

It carries out the reaction betaine aldehyde + NAD(+) + H2O = glycine betaine + NADH + 2 H(+). It functions in the pathway amine and polyamine biosynthesis; betaine biosynthesis via choline pathway; betaine from betaine aldehyde: step 1/1. Involved in the biosynthesis of the osmoprotectant glycine betaine. Catalyzes the irreversible oxidation of betaine aldehyde to the corresponding acid. The chain is Betaine aldehyde dehydrogenase from Cereibacter sphaeroides (strain ATCC 17023 / DSM 158 / JCM 6121 / CCUG 31486 / LMG 2827 / NBRC 12203 / NCIMB 8253 / ATH 2.4.1.) (Rhodobacter sphaeroides).